Consider the following 497-residue polypeptide: tRNA-2-methylthio-N(6)-dimethylallyladenosine synthase (497 aa).

The disordered stretch occupies residues 1–50 (MTGTSNIPTHGKEHKDAPALLPLPAPNPHHTHAAHPGDPSHDRPPSRGKL). An MTTase N-terminal domain is found at 48-165 (GKLFIKTHGC…LPDMIRARRE (118 aa)). Cysteine 57, cysteine 94, cysteine 128, cysteine 202, cysteine 206, and cysteine 209 together coordinate [4Fe-4S] cluster. The 243-residue stretch at 188 to 430 (RAEGPSAFVS…QKHINAYAAD (243 aa)) folds into the Radical SAM core domain. One can recognise a TRAM domain in the interval 433–496 (KRMIGTVQTV…TNSLRGRVHT (64 aa)).

The protein belongs to the methylthiotransferase family. MiaB subfamily. As to quaternary structure, monomer. It depends on [4Fe-4S] cluster as a cofactor.

It localises to the cytoplasm. The catalysed reaction is N(6)-dimethylallyladenosine(37) in tRNA + (sulfur carrier)-SH + AH2 + 2 S-adenosyl-L-methionine = 2-methylsulfanyl-N(6)-dimethylallyladenosine(37) in tRNA + (sulfur carrier)-H + 5'-deoxyadenosine + L-methionine + A + S-adenosyl-L-homocysteine + 2 H(+). Functionally, catalyzes the methylthiolation of N6-(dimethylallyl)adenosine (i(6)A), leading to the formation of 2-methylthio-N6-(dimethylallyl)adenosine (ms(2)i(6)A) at position 37 in tRNAs that read codons beginning with uridine. This Xylella fastidiosa (strain M12) protein is tRNA-2-methylthio-N(6)-dimethylallyladenosine synthase.